Consider the following 234-residue polypeptide: uncharacterized protein (234 aa).

Disordered regions lie at residues 1–65 (MTSV…RRGP) and 182–234 (ARGA…GRKT).

This is an uncharacterized protein from Homo sapiens (Human).